The primary structure comprises 248 residues: 21S rRNA pseudouridine(2819) synthase (248 aa).

Residue Asp-58 is part of the active site.

The protein belongs to the pseudouridine synthase RluA family.

The protein resides in the mitochondrion. It carries out the reaction uridine(2819) in 21S rRNA = pseudouridine(2819) in 21S rRNA. Its function is as follows. Pseudouridylate synthase responsible for the pseudouridine-2819 formation in mitochondrial 21S rRNA. May modulate the efficiency or the fidelity of the mitochondrial translation machinery. The polypeptide is 21S rRNA pseudouridine(2819) synthase (PUS5) (Candida albicans (strain SC5314 / ATCC MYA-2876) (Yeast)).